The following is a 166-amino-acid chain: Phosphopantetheine adenylyltransferase (166 aa).

Ser-9 is a binding site for substrate. ATP contacts are provided by residues 9 to 10 (SY) and His-17. The substrate site is built by Lys-41, Ile-75, and Lys-89. Residues 90 to 92 (GLR), Glu-100, and 124 to 130 (LEHISSS) each bind ATP.

The protein belongs to the bacterial CoaD family. Homohexamer. Mg(2+) is required as a cofactor.

It is found in the cytoplasm. It carries out the reaction (R)-4'-phosphopantetheine + ATP + H(+) = 3'-dephospho-CoA + diphosphate. The protein operates within cofactor biosynthesis; coenzyme A biosynthesis; CoA from (R)-pantothenate: step 4/5. In terms of biological role, reversibly transfers an adenylyl group from ATP to 4'-phosphopantetheine, yielding dephospho-CoA (dPCoA) and pyrophosphate. This chain is Phosphopantetheine adenylyltransferase, found in Bifidobacterium longum (strain DJO10A).